The chain runs to 47 residues: Photosystem II reaction center protein K (47 aa).

A propeptide spanning residues methionine 1 to alanine 10 is cleaved from the precursor. The helical transmembrane segment at leucine 26–phenylalanine 46 threads the bilayer.

Belongs to the PsbK family. In terms of assembly, PSII is composed of 1 copy each of membrane proteins PsbA, PsbB, PsbC, PsbD, PsbE, PsbF, PsbH, PsbI, PsbJ, PsbK, PsbL, PsbM, PsbT, PsbX, PsbY, Psb30/Ycf12, peripheral proteins PsbO, CyanoQ (PsbQ), PsbU, PsbV and a large number of cofactors. It forms dimeric complexes.

It is found in the cellular thylakoid membrane. Its function is as follows. One of the components of the core complex of photosystem II (PSII). PSII is a light-driven water:plastoquinone oxidoreductase that uses light energy to abstract electrons from H(2)O, generating O(2) and a proton gradient subsequently used for ATP formation. It consists of a core antenna complex that captures photons, and an electron transfer chain that converts photonic excitation into a charge separation. The polypeptide is Photosystem II reaction center protein K (Prochlorococcus marinus (strain SARG / CCMP1375 / SS120)).